Reading from the N-terminus, the 164-residue chain is UPF0304 protein PC1_2778 (164 aa).

Belongs to the UPF0304 family.

This is UPF0304 protein PC1_2778 from Pectobacterium carotovorum subsp. carotovorum (strain PC1).